A 319-amino-acid polypeptide reads, in one-letter code: Forkhead box protein E3 (319 aa).

Residues 1 to 69 are disordered; the sequence is MAGRSDMDPP…GRRRRRPLQR (69 aa). The segment covering 44 to 53 has biased composition (low complexity); the sequence is AAAGRGEAAP. Positions 71-165 form a DNA-binding region, fork-head; it reads KPPYSYIALI…DNGSFLRRRK (95 aa).

It localises to the nucleus. In terms of biological role, transcription factor that controls lens epithelial cell growth through regulation of proliferation, apoptosis and cell cycle. During lens development, controls the ratio of the lens fiber cells to the cells of the anterior lens epithelium by regulating the rate of proliferation and differentiation. Controls lens vesicle closure and subsequent separation of the lens vesicle from ectoderm. Controls the expression of DNAJB1 in a pathway that is crucial for the development of the anterior segment of the eye. In Homo sapiens (Human), this protein is Forkhead box protein E3 (FOXE3).